Consider the following 430-residue polypeptide: von Willebrand factor (430 aa).

An N-linked (GlcNAc...) asparagine glycan is attached at Asn6. The cysteines at positions 9 and 12 are disulfide-linked. Residues Thr23, Thr30, and Thr31 are each glycosylated (O-linked (GalNAc...) threonine). Cysteines 47 and 233 form a disulfide. The region spanning 52–228 is the VWFA 1; binding site for platelet glycoprotein Ib domain; sequence DLVFLLDGSY…DELEQRRDEI (177 aa). Thr252 carries O-linked (GalNAc...) threonine glycosylation. Residue Ser261 is glycosylated (O-linked (GalNAc...) serine). Positions 273-430 constitute a VWFA 2 domain; it reads DVVFVLEASD…ITPIFIQDFE (158 aa). 2 N-linked (GlcNAc...) asparagine glycosylation sites follow: Asn290 and Asn349.

As to quaternary structure, multimeric. Interacts with F8. N- and O-glycosylated. Plasma.

The protein localises to the secreted. It localises to the extracellular space. The protein resides in the extracellular matrix. Important in the maintenance of hemostasis, it promotes adhesion of platelets to the sites of vascular injury by forming a molecular bridge between sub-endothelial collagen matrix and platelet-surface receptor complex GPIb-IX-V. Also acts as a chaperone for coagulation factor VIII, delivering it to the site of injury, stabilizing its heterodimeric structure and protecting it from premature clearance from plasma. In Rattus norvegicus (Rat), this protein is von Willebrand factor.